The primary structure comprises 399 residues: S-adenosylmethionine synthase (399 aa).

His-17 is a binding site for ATP. Mg(2+) is bound at residue Asp-19. K(+) is bound at residue Glu-45. Glu-58 and Gln-101 together coordinate L-methionine. Residues 101-111 form a flexible loop region; the sequence is QSPDIAQGVDE. Residues 177-179, 244-245, Asp-253, 259-260, Ala-276, and Lys-280 contribute to the ATP site; these read DAK, RF, and RK. Residue Asp-253 participates in L-methionine binding. Lys-284 lines the L-methionine pocket.

It belongs to the AdoMet synthase family. As to quaternary structure, homotetramer; dimer of dimers. It depends on Mg(2+) as a cofactor. K(+) is required as a cofactor.

The protein localises to the cytoplasm. The enzyme catalyses L-methionine + ATP + H2O = S-adenosyl-L-methionine + phosphate + diphosphate. Its pathway is amino-acid biosynthesis; S-adenosyl-L-methionine biosynthesis; S-adenosyl-L-methionine from L-methionine: step 1/1. Catalyzes the formation of S-adenosylmethionine (AdoMet) from methionine and ATP. The overall synthetic reaction is composed of two sequential steps, AdoMet formation and the subsequent tripolyphosphate hydrolysis which occurs prior to release of AdoMet from the enzyme. The sequence is that of S-adenosylmethionine synthase from Listeria welshimeri serovar 6b (strain ATCC 35897 / DSM 20650 / CCUG 15529 / CIP 8149 / NCTC 11857 / SLCC 5334 / V8).